The primary structure comprises 154 residues: Aspartate carbamoyltransferase regulatory chain (154 aa).

The Zn(2+) site is built by C109, C114, C138, and C141.

The protein belongs to the PyrI family. In terms of assembly, contains catalytic and regulatory chains. It depends on Zn(2+) as a cofactor.

Involved in allosteric regulation of aspartate carbamoyltransferase. In Yersinia pestis, this protein is Aspartate carbamoyltransferase regulatory chain.